Reading from the N-terminus, the 163-residue chain is Crossover junction endodeoxyribonuclease RuvC (163 aa).

Active-site residues include aspartate 7, glutamate 67, and aspartate 140. Mg(2+) contacts are provided by aspartate 7, glutamate 67, and aspartate 140.

It belongs to the RuvC family. In terms of assembly, homodimer which binds Holliday junction (HJ) DNA. The HJ becomes 2-fold symmetrical on binding to RuvC with unstacked arms; it has a different conformation from HJ DNA in complex with RuvA. In the full resolvosome a probable DNA-RuvA(4)-RuvB(12)-RuvC(2) complex forms which resolves the HJ. The cofactor is Mg(2+).

The protein resides in the cytoplasm. The enzyme catalyses Endonucleolytic cleavage at a junction such as a reciprocal single-stranded crossover between two homologous DNA duplexes (Holliday junction).. Its function is as follows. The RuvA-RuvB-RuvC complex processes Holliday junction (HJ) DNA during genetic recombination and DNA repair. Endonuclease that resolves HJ intermediates. Cleaves cruciform DNA by making single-stranded nicks across the HJ at symmetrical positions within the homologous arms, yielding a 5'-phosphate and a 3'-hydroxyl group; requires a central core of homology in the junction. The consensus cleavage sequence is 5'-(A/T)TT(C/G)-3'. Cleavage occurs on the 3'-side of the TT dinucleotide at the point of strand exchange. HJ branch migration catalyzed by RuvA-RuvB allows RuvC to scan DNA until it finds its consensus sequence, where it cleaves and resolves the cruciform DNA. The chain is Crossover junction endodeoxyribonuclease RuvC from Desulforamulus reducens (strain ATCC BAA-1160 / DSM 100696 / MI-1) (Desulfotomaculum reducens).